Here is a 324-residue protein sequence, read N- to C-terminus: Zinc finger C2HC domain-containing protein 1A (324 aa).

The segment at 15–44 (ELLPCKICGRTFFPVALKKHGPICKKTATK) adopts a C2HC/C3H-type 1 zinc-finger fold. Residues C19, C22, H34, and C38 each contribute to the Zn(2+) site. The segment at 43-83 (TKKRKTFDSSRQRAEGTDIPTVKPLKPRPEPPKKPSNWRRK) is disordered. The span at 48-58 (TFDSSRQRAEG) shows a compositional bias: basic and acidic residues. The C2HC/C3H-type 2 zinc-finger motif lies at 118–147 (DYIQCPYCQRRFNENAADRHINFCKEQAAR). Residues C122, C125, H137, and C141 each contribute to the Zn(2+) site. Disordered stretches follow at residues 150-224 (NKGK…LSPS) and 236-259 (NVKP…LTNK). Low complexity-rich tracts occupy residues 176-187 (SNSPGTASSGSS) and 196-215 (GKTV…SSLG). S222 is subject to Phosphoserine. Phosphothreonine is present on T243. Residue S291 is modified to Phosphoserine.

Belongs to the ZC2HC1 family. It depends on Zn(2+) as a cofactor.

This chain is Zinc finger C2HC domain-containing protein 1A (ZC2HC1A), found in Pongo abelii (Sumatran orangutan).